The chain runs to 211 residues: Probable nicotinate-nucleotide adenylyltransferase (211 aa).

Belongs to the NadD family.

It carries out the reaction nicotinate beta-D-ribonucleotide + ATP + H(+) = deamido-NAD(+) + diphosphate. The protein operates within cofactor biosynthesis; NAD(+) biosynthesis; deamido-NAD(+) from nicotinate D-ribonucleotide: step 1/1. Functionally, catalyzes the reversible adenylation of nicotinate mononucleotide (NaMN) to nicotinic acid adenine dinucleotide (NaAD). This Thermoanaerobacter sp. (strain X514) protein is Probable nicotinate-nucleotide adenylyltransferase.